The sequence spans 876 residues: MRFLSFLIFVFAVLGLVQAQDQSGFISLDCGLVPTEITYVEKSTNITYRSDATYIDSGVPGKINEVYRTQFQQQIWALRSFPEGQRNCYNFSLTAKRKYLIRGTFIYGNYDGLNQLPSFDLYIGPNKWTSVSIPGVRNGSVSEMIHVLRQDHLQICLVKTGETTPFISSLELRPLNNNTYVTKSGSLIVVARLYFSPTPPFLRYDEDVHDRIWIPFLDNKNSLLSTELSVDTSNFYNVPQTVAKTAAVPLNATQPLKINWSLDDITSQSYIYMHFAEIENLEANETREFNITYNGGENWFSYFRPPKFRITTVYNPAAVSSLDGNFNFTFSMTGNSTHPPLINGLEIYQVLELPQLDTYQDEVSAMMNIKTIYGLSKRSSWQGDPCAPELYRWEGLNCSYPNFAPPQIISLNLSGSNLSGTITSDISKLTHLRELDLSNNDLSGDIPFVFSDMKNLTLINLSGNKNLNRSVPETLQKRIDNKSLTLIRDETGKNSTNVVAIAASVASVFAVLVILAIVFVVIRKKQRTNEASGPRSFTTGTVKSDARSSSSSIITKERKFTYSEVLKMTKNFERVLGKGGFGTVYHGNLDDTQVAVKMLSHSSAQGYKEFKAEVELLLRVHHRHLVGLVGYCDDGDNLALIYEYMEKGDLRENMSGKHSVNVLSWETRMQIAVEAAQGLEYLHNGCRPPMVHRDVKPTNILLNERSQAKLADFGLSRSFPVDGESHVMTVVAGTPGYLDPEYYRTNWLSEKSDVYSFGVVLLEIVTNQPVMNKNRERPHINEWVMFMLTNGDIKSIVDPKLNEDYDTNGVWKVVELALACVNPSSSRRPTMPHVVMELNECLALEIERKQGSQATYIKESVEFSPSSASDFSPLAR.

Positions 1 to 19 are cleaved as a signal peptide; it reads MRFLSFLIFVFAVLGLVQA. Residues 20–500 are Extracellular-facing; sequence QDQSGFISLD…TGKNSTNVVA (481 aa). N-linked (GlcNAc...) asparagine glycosylation is found at asparagine 45, asparagine 90, asparagine 138, asparagine 177, asparagine 251, asparagine 259, asparagine 284, asparagine 290, asparagine 327, asparagine 335, asparagine 397, asparagine 412, and asparagine 417. 3 LRR repeats span residues 407–430, 431–453, and 455–476; these read QIISLNLSGSNLSGTITSDISKLT, HLRELDLSNNDLSGDIPFVFSDM, and NLTLINLSGNKNLNRSVPETLQ. 5 N-linked (GlcNAc...) asparagine glycosylation sites follow: asparagine 455, asparagine 460, asparagine 468, asparagine 481, and asparagine 494. The chain crosses the membrane as a helical span at residues 501–521; it reads IAASVASVFAVLVILAIVFVV. The Cytoplasmic portion of the chain corresponds to 522-872; the sequence is IRKKQRTNEA…FSPSSASDFS (351 aa). Threonine 561 carries the phosphothreonine modification. The 273-residue stretch at 570-842 folds into the Protein kinase domain; it reads KNFERVLGKG…HVVMELNECL (273 aa). ATP contacts are provided by residues 576–584 and lysine 597; that span reads LGKGGFGTV. Tyrosine 642 carries the post-translational modification Phosphotyrosine. Aspartate 694 (proton acceptor) is an active-site residue. A phosphothreonine mark is found at threonine 729 and threonine 734. Tyrosine 742 carries the phosphotyrosine modification.

The protein belongs to the protein kinase superfamily. Ser/Thr protein kinase family.

It is found in the cell membrane. The catalysed reaction is L-seryl-[protein] + ATP = O-phospho-L-seryl-[protein] + ADP + H(+). It carries out the reaction L-threonyl-[protein] + ATP = O-phospho-L-threonyl-[protein] + ADP + H(+). This chain is Probable LRR receptor-like protein kinase At1g51890, found in Arabidopsis thaliana (Mouse-ear cress).